We begin with the raw amino-acid sequence, 154 residues long: Ribosome maturation factor RimP (154 aa).

The protein belongs to the RimP family.

The protein localises to the cytoplasm. In terms of biological role, required for maturation of 30S ribosomal subunits. This chain is Ribosome maturation factor RimP, found in Yersinia pseudotuberculosis serotype O:1b (strain IP 31758).